Here is a 40-residue protein sequence, read N- to C-terminus: Large ribosomal subunit protein bL36 (40 aa).

It belongs to the bacterial ribosomal protein bL36 family.

The chain is Large ribosomal subunit protein bL36 from Coxiella burnetii (strain Dugway 5J108-111).